Here is a 244-residue protein sequence, read N- to C-terminus: Triosephosphate isomerase (244 aa).

9–11 (NWK) is a binding site for substrate. His-93 serves as the catalytic Electrophile. Residue Glu-160 is the Proton acceptor of the active site. Substrate is bound by residues Gly-166 and Ser-206.

It belongs to the triosephosphate isomerase family. As to quaternary structure, homodimer.

It is found in the cytoplasm. It carries out the reaction D-glyceraldehyde 3-phosphate = dihydroxyacetone phosphate. The protein operates within carbohydrate biosynthesis; gluconeogenesis. It functions in the pathway carbohydrate degradation; glycolysis; D-glyceraldehyde 3-phosphate from glycerone phosphate: step 1/1. In terms of biological role, involved in the gluconeogenesis. Catalyzes stereospecifically the conversion of dihydroxyacetone phosphate (DHAP) to D-glyceraldehyde-3-phosphate (G3P). The chain is Triosephosphate isomerase from Mycoplasma genitalium (strain ATCC 33530 / DSM 19775 / NCTC 10195 / G37) (Mycoplasmoides genitalium).